A 318-amino-acid polypeptide reads, in one-letter code: Pantothenate kinase (318 aa).

Gly-96 to Ser-103 provides a ligand contact to ATP.

It belongs to the prokaryotic pantothenate kinase family.

The protein resides in the cytoplasm. It carries out the reaction (R)-pantothenate + ATP = (R)-4'-phosphopantothenate + ADP + H(+). It participates in cofactor biosynthesis; coenzyme A biosynthesis; CoA from (R)-pantothenate: step 1/5. The protein is Pantothenate kinase of Rhodopseudomonas palustris (strain BisB5).